The following is a 450-amino-acid chain: Cytidylate cyclase (450 aa).

The region spanning 97–236 is the Guanylate cyclase domain; sequence VTMFVDIRKS…LPVDMTAKLQ (140 aa). Phe100 serves as a coordination point for a ribonucleoside 5'-triphosphate. Mn(2+)-binding residues include Asp102, Ile103, and Asp146. The segment at 318 to 450 is AGS-C domain; it reads PNQFNFECFV…YRNIIGVYIK (133 aa).

The protein belongs to the adenylyl cyclase class-4/guanylyl cyclase family. Pyrimidine cyclase subfamily. In terms of assembly, homodimer. Mn(2+) is required as a cofactor.

It localises to the cytoplasm. It carries out the reaction CTP = 3',5'-cyclic CMP + diphosphate. Its activity is regulated as follows. In E.coli strain MG1655 transformed with both genes cCMP appears between 15 and 30 minutes after infection with phage T5 (at protein level). No cCMP accumulates in uninfected cells. Its function is as follows. Pycsar (pyrimidine cyclase system for antiphage resistance) provides immunity against bacteriophage. The pyrimidine cyclase (PycC) synthesizes cyclic nucleotides in response to infection; these serve as specific second messenger signals. The signal activates the adjacent effector, leading to bacterial cell death and abortive phage infection. A clade E Pycsar system. Functionally, the pyrimidine cyclase gene of a two-gene Pycsar system, generates cyclic CMP (cCMP) from CTP in response to bacteriophage infection. Has little to no activity on ATP, GTP or UTP. Expression of this and adjacent effector EcPycTM (AC P0DV25) confers resistance to bacteriophage P1 and T5; expression of this gene alone does not confer resistance. When cells expressing the Pycsar system are infected by phage T5 at low multiplicity of infection (0.2 MOI) the culture survives, at 2.0 MOI bacteria enter growth arrest. The same cells enter growth arrest after exposure to 250 uM cCMP but not cUMP; thus the effector protein responds only to the cNMP produced by its cognate NTP cyclase. Some of the cells treated with cCMP have abnormal membrane protrusions. The polypeptide is Cytidylate cyclase (Escherichia coli).